The primary structure comprises 973 residues: MDGSLYGECGNYIGPEIESDRDSDDSVEDEDLQEPGGSNGWITTINENQNIVLPEDKKYYPIAKEVYGEDVETLVMDEDEQSLEQPIIKPVRDIRFEVGVIKDQTTTYVSTLFLIGLMSNPALVRNVALVGHLQHGKTVFMDMLVEQTHRMSTFNAENDKHMRYTDTRVDEQERNISIKAVPMSLVLEDSRSKSYLCNIMDTPGNVNFSDEMTASLRLADGAVFIVDAAQGVMVNTERAIRHAIQDHLPIVVVINKVDRLITELKLPPRDAYYKLRYTIEVINNHISAASTNAADLPLIDPAAGNVCFASGTAGWSFTLQSFARMYAKLHGVAMDVDKFASRLWGDVYYHPDTRVFNTSPPVGGGERAFVQFILEPLYKIYSQVIGEHKKSVETTLAELGVTLSNSAYKLNVRPLLRLACSSVFGSASGFTDMLVKHIPSPREAAARKVDHSYTGTKDSPIYESMVECDPSGPLMVNVTKLYPKSDTSVFDVFGRVYSGRLQTGQSVRVLGEGYSPEDEEDMTIKEVTKLWIYQARYRIPVSSAPPGSWVLIEGVDASIMKTATLCNASYDEDVYIFRALKFNTLPVVKTATEPLNPSELPKMVEGLRKISKSYPLAITKVEESGEHTILGTGELYLDSIIKDLRELYSEVQVKVADPVVSFCETVVESSSMKCFAETPNKKNKLTMIAEPLDRGLAEDIENGVVSIDWNRVQLGDFFRTKYDWDLLAARSIWAFGPDKQGTNILLDDTLPTEVDRNLMMGVKDSIVQGFQWGAREGPLCDEPIRNVKFKIVDARIAPEPLHRGSGQMIPTARRVAYSAFLMATPRLMEPVYYVEIQTPIDCVTAIYTVLSRRRGYVTSDVPQPGTPAYIVKAFLPVIESFGFETDLRYHTQGQAFCLSVFDHWAIVPGDPLDKAIQLRPLEPAPIQHLAREFMVKTRRRKGMSEDVSGNKFFDEAMMVELAQQTGDLHLQMI.

The interval 1–40 (MDGSLYGECGNYIGPEIESDRDSDDSVEDEDLQEPGGSNG) is disordered. Residues 17–33 (IESDRDSDDSVEDEDLQ) are compositionally biased toward acidic residues. The tr-type G domain maps to 122–408 (ALVRNVALVG…LGVTLSNSAY (287 aa)). Residues 131 to 138 (GHLQHGKT) form a G1 region. 131–138 (GHLQHGKT) is a binding site for GTP. The interval 175–179 (NISIK) is G2. Residues 201-204 (DTPG) are G3. GTP-binding positions include 201 to 205 (DTPGN) and 255 to 258 (NKVD). Positions 255-258 (NKVD) are G4. Positions 381–383 (YSQ) are G5.

Belongs to the TRAFAC class translation factor GTPase superfamily. Classic translation factor GTPase family. As to expression, expressed in flower buds, open flowers and siliques. Expressed at low levels in rosettes leaves, cauline leaves and stems.

Its subcellular location is the nucleus speckle. Its function is as follows. Splicing factor involved in pre-mRNA splicing and component of the spliceosome. The sequence is that of 109 kDa U5 small nuclear ribonucleoprotein component GFL from Arabidopsis thaliana (Mouse-ear cress).